Reading from the N-terminus, the 284-residue chain is 4-diphosphocytidyl-2-C-methyl-D-erythritol kinase (284 aa).

Residue Lys-14 is part of the active site. Position 98–108 (98–108) interacts with ATP; it reads PMGGGLGGGSS. Residue Asp-140 is part of the active site.

This sequence belongs to the GHMP kinase family. IspE subfamily.

The enzyme catalyses 4-CDP-2-C-methyl-D-erythritol + ATP = 4-CDP-2-C-methyl-D-erythritol 2-phosphate + ADP + H(+). It participates in isoprenoid biosynthesis; isopentenyl diphosphate biosynthesis via DXP pathway; isopentenyl diphosphate from 1-deoxy-D-xylulose 5-phosphate: step 3/6. Its function is as follows. Catalyzes the phosphorylation of the position 2 hydroxy group of 4-diphosphocytidyl-2C-methyl-D-erythritol. This Shewanella oneidensis (strain ATCC 700550 / JCM 31522 / CIP 106686 / LMG 19005 / NCIMB 14063 / MR-1) protein is 4-diphosphocytidyl-2-C-methyl-D-erythritol kinase.